Here is a 936-residue protein sequence, read N- to C-terminus: Protocadherin alpha-5 (936 aa).

A signal peptide spans 1–28 (MVYSRRGSLGSRLLLLWLLLAYWKAGSG). Residues 29–696 (QLHYSIPEEA…GPEAALVDVN (668 aa)) lie on the Extracellular side of the membrane. 6 consecutive Cadherin domains span residues 33 to 132 (SIPE…PPRF), 156 to 241 (ASDL…APEF), 242 to 349 (DKSI…TPEM), 350 to 454 (AITT…LRAF), 455 to 564 (AQPQ…APAL), and 580 to 677 (VPRS…APKA). Asparagine 264, asparagine 448, and asparagine 547 each carry an N-linked (GlcNAc...) asparagine glycan. Residues 697–717 (VYLIIAICAVSSLLVLTLLLY) form a helical membrane-spanning segment. At 718-936 (TALRCSAQPT…GNSTTDNSDQ (219 aa)) the chain is on the cytoplasmic side. Disordered stretches follow at residues 759 to 793 (SGEA…PDWR), 815 to 875 (RAGP…DKFI), and 887 to 936 (QEPA…NSDQ). PXXP repeat units follow at residues 773 to 776 (PSLP), 785 to 788 (PRQP), 818 to 821 (PGGP), 873 to 876 (KFII), and 877 to 890 (PGSP…QEPA). The 5 X 4 AA repeats of P-X-X-P stretch occupies residues 773–890 (PSLPQGPTST…AIISIRQEPA (118 aa)). Polar residues predominate over residues 774-786 (SLPQGPTSTDNPR). A compositionally biased stretch (basic and acidic residues) spans 895–909 (DKSDFITFGKKEETK).

The protein localises to the cell membrane. Potential calcium-dependent cell-adhesion protein. May be involved in the establishment and maintenance of specific neuronal connections in the brain. The sequence is that of Protocadherin alpha-5 (PCDHA5) from Pan troglodytes (Chimpanzee).